A 372-amino-acid chain; its full sequence is 4-hydroxy-3-methylbut-2-en-1-yl diphosphate synthase (flavodoxin) (372 aa).

[4Fe-4S] cluster-binding residues include Cys270, Cys273, Cys305, and Glu312.

This sequence belongs to the IspG family. [4Fe-4S] cluster serves as cofactor.

The enzyme catalyses (2E)-4-hydroxy-3-methylbut-2-enyl diphosphate + oxidized [flavodoxin] + H2O + 2 H(+) = 2-C-methyl-D-erythritol 2,4-cyclic diphosphate + reduced [flavodoxin]. It functions in the pathway isoprenoid biosynthesis; isopentenyl diphosphate biosynthesis via DXP pathway; isopentenyl diphosphate from 1-deoxy-D-xylulose 5-phosphate: step 5/6. Converts 2C-methyl-D-erythritol 2,4-cyclodiphosphate (ME-2,4cPP) into 1-hydroxy-2-methyl-2-(E)-butenyl 4-diphosphate. The chain is 4-hydroxy-3-methylbut-2-en-1-yl diphosphate synthase (flavodoxin) from Salmonella arizonae (strain ATCC BAA-731 / CDC346-86 / RSK2980).